The following is a 272-amino-acid chain: HMP-PP phosphatase (272 aa).

Catalysis depends on D8, which acts as the Nucleophile. Residues D8, D10, and D212 each contribute to the Mg(2+) site.

It belongs to the HAD-like hydrolase superfamily. Cof family. Requires Mg(2+) as cofactor.

The enzyme catalyses 4-amino-2-methyl-5-(diphosphooxymethyl)pyrimidine + H2O = 4-amino-2-methyl-5-(phosphooxymethyl)pyrimidine + phosphate + H(+). Functionally, catalyzes the hydrolysis of 4-amino-2-methyl-5-hydroxymethylpyrimidine pyrophosphate (HMP-PP) to 4-amino-2-methyl-5-hydroxymethylpyrimidine phosphate (HMP-P). This Escherichia coli O81 (strain ED1a) protein is HMP-PP phosphatase.